Here is a 415-residue protein sequence, read N- to C-terminus: Serine hydroxymethyltransferase (415 aa).

(6S)-5,6,7,8-tetrahydrofolate-binding positions include leucine 117 and 121 to 123; that span reads GHL. Residue lysine 226 is modified to N6-(pyridoxal phosphate)lysine. (6S)-5,6,7,8-tetrahydrofolate contacts are provided by residues glutamate 241 and 349 to 351; that span reads SPF.

The protein belongs to the SHMT family. Homodimer. The cofactor is pyridoxal 5'-phosphate.

It localises to the cytoplasm. The enzyme catalyses (6R)-5,10-methylene-5,6,7,8-tetrahydrofolate + glycine + H2O = (6S)-5,6,7,8-tetrahydrofolate + L-serine. Its pathway is one-carbon metabolism; tetrahydrofolate interconversion. It participates in amino-acid biosynthesis; glycine biosynthesis; glycine from L-serine: step 1/1. In terms of biological role, catalyzes the reversible interconversion of serine and glycine with tetrahydrofolate (THF) serving as the one-carbon carrier. This reaction serves as the major source of one-carbon groups required for the biosynthesis of purines, thymidylate, methionine, and other important biomolecules. Also exhibits THF-independent aldolase activity toward beta-hydroxyamino acids, producing glycine and aldehydes, via a retro-aldol mechanism. This Geobacter metallireducens (strain ATCC 53774 / DSM 7210 / GS-15) protein is Serine hydroxymethyltransferase.